The chain runs to 122 residues: Large ribosomal subunit protein uL14 (122 aa).

Belongs to the universal ribosomal protein uL14 family. Part of the 50S ribosomal subunit. Forms a cluster with proteins L3 and L19. In the 70S ribosome, L14 and L19 interact and together make contacts with the 16S rRNA in bridges B5 and B8.

Its function is as follows. Binds to 23S rRNA. Forms part of two intersubunit bridges in the 70S ribosome. The polypeptide is Large ribosomal subunit protein uL14 (Thermoanaerobacter pseudethanolicus (strain ATCC 33223 / 39E) (Clostridium thermohydrosulfuricum)).